The primary structure comprises 282 residues: Glutamyl endopeptidase (282 aa).

A signal peptide spans 1–27; it reads MKKRFLSICTMTIAALATTTMVNTSYA. Residues 28–66 constitute a propeptide that is removed on maturation; the sequence is KTDTESHNHSSLGTENKNVLDINSSSHNIKPSQNKSYPS. Residues His-117, Asp-159, and Ser-235 each act as charge relay system in the active site.

It belongs to the peptidase S1B family. Monomer.

The protein localises to the secreted. The catalysed reaction is Preferential cleavage: Glu-|-Xaa, Asp-|-Xaa.. Inhibited by diisopropyl fluorophosphate. Functionally, exhibits a significant hydrolytic activity for the carbonyl side of glutamic acid. Shows activity toward human fibronectin and type 1 collagen. In Staphylococcus epidermidis, this protein is Glutamyl endopeptidase (gseA).